A 156-amino-acid polypeptide reads, in one-letter code: ATP synthase subunit b (156 aa).

The chain crosses the membrane as a helical span at residues 7 to 29 (LIGQLIAFALFTWFCVKFVWPPI).

Belongs to the ATPase B chain family. As to quaternary structure, F-type ATPases have 2 components, F(1) - the catalytic core - and F(0) - the membrane proton channel. F(1) has five subunits: alpha(3), beta(3), gamma(1), delta(1), epsilon(1). F(0) has three main subunits: a(1), b(2) and c(10-14). The alpha and beta chains form an alternating ring which encloses part of the gamma chain. F(1) is attached to F(0) by a central stalk formed by the gamma and epsilon chains, while a peripheral stalk is formed by the delta and b chains.

It is found in the cell inner membrane. Functionally, f(1)F(0) ATP synthase produces ATP from ADP in the presence of a proton or sodium gradient. F-type ATPases consist of two structural domains, F(1) containing the extramembraneous catalytic core and F(0) containing the membrane proton channel, linked together by a central stalk and a peripheral stalk. During catalysis, ATP synthesis in the catalytic domain of F(1) is coupled via a rotary mechanism of the central stalk subunits to proton translocation. In terms of biological role, component of the F(0) channel, it forms part of the peripheral stalk, linking F(1) to F(0). The sequence is that of ATP synthase subunit b from Mannheimia succiniciproducens (strain KCTC 0769BP / MBEL55E).